Reading from the N-terminus, the 738-residue chain is Alcohol dehydrogenase (quinone), dehydrogenase subunit (738 aa).

Positions 1 to 35 are cleaved as a signal peptide; sequence MISAVFGKRRSLSRTLTAGTICAALISGYATMASA. Residue Glu97 coordinates pyrroloquinoline quinone. Cys143 and Cys144 are oxidised to a cystine. Arg149 is a binding site for pyrroloquinoline quinone. Glu217 contacts Ca(2+). Residue Thr278 participates in pyrroloquinoline quinone binding. The Ca(2+) site is built by Asn298 and Asp343. Asp343 serves as the catalytic Proton acceptor. Positions 370 and 584 each coordinate pyrroloquinoline quinone. The Cytochrome c domain maps to 634-738; it reads FDSKRTDNGY…NADGIPEQLP (105 aa). Heme c is bound by residues Cys650, Cys653, His654, and Met693.

This sequence belongs to the bacterial PQQ dehydrogenase family. In terms of assembly, the alcohol dehydrogenase multicomponent enzyme system is composed of a dehydrogenase subunit I (AdhA) and a cytochrome c subunit II (AdhB). It depends on pyrroloquinoline quinone as a cofactor. Ca(2+) is required as a cofactor. Requires heme c as cofactor.

It localises to the cell membrane. It carries out the reaction ethanol + a ubiquinone = a ubiquinol + acetaldehyde. In terms of biological role, dehydrogenase component of the alcohol dehydrogenase multicomponent enzyme system which is involved in the production of acetic acid and in the ethanol oxidase respiratory chain. Quinohemoprotein alcohol dehydrogenase (ADH) catalyzes the oxidation of ethanol to acetaldehyde by transferring electrons to the ubiquinone embedded in the membrane phospholipids. The electrons transfer from ethanol to membranous ubiquinone occurs from pyrroloquinoline quinone (PQQ) to one heme c in subunit I (AdhA), and finally to two heme c in subunit II (AdhB). Besides ubiquinone reduction, ADH also has a ubiquinol (QH2) oxidation reaction which mediates electron transfer from ubiquinol to the non-energy generating bypass oxidase system. The electrons transfer occurs from ubiquinol (QH2) to the additional heme c within subunit II (AdhB). This chain is Alcohol dehydrogenase (quinone), dehydrogenase subunit (adhA), found in Gluconacetobacter polyoxogenes (Acetobacter polyoxogenes).